The sequence spans 83 residues: Alpha-elapitoxin-Ppr1 (83 aa).

The signal sequence occupies residues 1–21 (MKTLLLTLVVVTIVCLDLGYT). 4 disulfides stabilise this stretch: C24-C45, C38-C62, C64-C75, and C76-C81.

This sequence belongs to the three-finger toxin family. Short-chain subfamily. Type I alpha-neurotoxin sub-subfamily. In terms of tissue distribution, expressed by the venom gland.

It localises to the secreted. Functionally, bird-specific neurotoxin (tested on chicken) that acts as a pseudo-irreversible antagonist at the nicotinic acetylcholine receptor (nAChR) of the skeletal neuromuscular junction. Has no significant effect on the electrically-induced twitches of the rat isolated phrenic nerve-diaphragm preparation. This chain is Alpha-elapitoxin-Ppr1, found in Pseudechis porphyriacus (Red-bellied black snake).